The following is a 257-amino-acid chain: Zinc import ATP-binding protein ZnuC (257 aa).

The ABC transporter domain maps to 5 to 220 (VELQSVTVTF…PSYVALFGQQ (216 aa)). 37–44 (GPNGAGKS) is an ATP binding site. The tract at residues 234–257 (HEHDLAGSPVGPCQHNKQHGHDNA) is disordered.

It belongs to the ABC transporter superfamily. Zinc importer (TC 3.A.1.15.5) family. The complex is composed of two ATP-binding proteins (ZnuC), two transmembrane proteins (ZnuB) and a solute-binding protein (ZnuA).

It localises to the cell inner membrane. It catalyses the reaction Zn(2+)(out) + ATP(in) + H2O(in) = Zn(2+)(in) + ADP(in) + phosphate(in) + H(+)(in). In terms of biological role, part of the ABC transporter complex ZnuABC involved in zinc import. Responsible for energy coupling to the transport system. The protein is Zinc import ATP-binding protein ZnuC of Photobacterium profundum (strain SS9).